A 504-amino-acid chain; its full sequence is Cytoplasmic dynein 1 light intermediate chain 1 (504 aa).

35–42 (GDPTSGKS) contributes to the ATP binding site. 3 stretches are compositionally biased toward low complexity: residues 167-189 (TTTA…TNKT), 392-425 (NSPS…NTPL), and 437-446 (SSNNPVAASP). Disordered regions lie at residues 167-195 (TTTA…TTDK), 383-446 (LDND…AASP), and 464-504 (DKTS…QQKK). The span at 464-473 (DKTSSRKDLK) shows a compositional bias: basic and acidic residues. Residues 475–487 (SLASPPTTSVSSN) are compositionally biased toward polar residues. A compositionally biased stretch (basic and acidic residues) spans 488–504 (AREDAKKELDKLKQQKK).

Belongs to the dynein light intermediate chain family. Homodimer. The cytoplasmic dynein 1 complex consists of two catalytic heavy chains (HCs) and a number of non-catalytic subunits presented by intermediate chains (ICs), light intermediate chains (LICs) and light chains (LCs).

The protein resides in the cytoplasm. It is found in the cytoskeleton. Its function is as follows. Acts as one of several non-catalytic accessory components of the cytoplasmic dynein 1 complex that are thought to be involved in linking dynein to cargos and to adapter proteins that regulate dynein function. Cytoplasmic dynein 1 acts as a motor for the intracellular retrograde motility of vesicles and organelles along microtubules. May play a role in binding dynein to membranous organelles or chromosomes. This chain is Cytoplasmic dynein 1 light intermediate chain 1 (dync1li1), found in Dictyostelium discoideum (Social amoeba).